The following is a 427-amino-acid chain: Endothelin-1 receptor (427 aa).

An N-terminal signal peptide occupies residues 1-20 (METFWLRVSFWVALVGGVIS). Over 21–80 (DNPESYSTNLSIHVDSVTTFRGTELSFVVTTHQPTNLALPSNGSMHNYCPQQTKITSAFK) the chain is Extracellular. N-linked (GlcNAc...) asparagine glycosylation is found at asparagine 29 and asparagine 62. A helical transmembrane segment spans residues 81 to 102 (YINTVISCTIFIVGMVGNATLL). Topologically, residues 103 to 112 (RIIYQNKCMR) are cytoplasmic. Residues 113–132 (NGPNALIASLALGDLIYVVI) traverse the membrane as a helical segment. Residues 133–159 (DLPINVFKLLAGRWPFEQNDFGVFLCK) are Extracellular-facing. A disulfide bond links cysteine 158 and cysteine 239. A helical membrane pass occupies residues 160-181 (LFPFLQKSSVGITVLNLCALSV). The Cytoplasmic portion of the chain corresponds to 182 to 205 (DRYRAVASWSRVQGIGIPLVTAIE). The helical transmembrane segment at 206–229 (IVSIWILSFILAIPEAIGFVMVPF) threads the bilayer. Residues 230–256 (EYKGAQHRTCMLNATSKFMEFYQDVKD) lie on the Extracellular side of the membrane. Residues 257-278 (WWLFGFYFCMPLVCTAIFYTLM) traverse the membrane as a helical segment. The Cytoplasmic portion of the chain corresponds to 279–306 (TCEMLNRRNGSLRIALSEHLKQRREVAK). The helical transmembrane segment at 307–328 (TVFCLVVIFALCWFPLHLSRIL) threads the bilayer. At 329-347 (KKTVYDEMDTNRCELLSFL) the chain is on the extracellular side. The chain crosses the membrane as a helical span at residues 348-372 (LLMDYIGINLATMNSCINPIALYFV). Topologically, residues 373–427 (SKKFKNCFQSCLCCCCYQSKSLMTSVPMNGTSIQWKNPEQNNHNTERSSHKDSIN) are cytoplasmic. Residues 405 to 415 (IQWKNPEQNNH) are compositionally biased toward polar residues. Residues 405-427 (IQWKNPEQNNHNTERSSHKDSIN) form a disordered region. The span at 416–427 (NTERSSHKDSIN) shows a compositional bias: basic and acidic residues. Residue serine 425 is modified to Phosphoserine.

It belongs to the G-protein coupled receptor 1 family. Endothelin receptor subfamily. EDNRA sub-subfamily. In terms of assembly, interacts with HDAC7 and KAT5.

It localises to the cell membrane. In terms of biological role, receptor for endothelin-1. Mediates its action by association with G proteins that activate a phosphatidylinositol-calcium second messenger system. The rank order of binding affinities for ET-A is: ET1 &gt; ET2 &gt;&gt; ET3. The sequence is that of Endothelin-1 receptor from Ovis aries (Sheep).